A 283-amino-acid polypeptide reads, in one-letter code: Thymidylate synthase (283 aa).

Arg22 is a binding site for dUMP. Catalysis depends on Cys160, which acts as the Nucleophile. DUMP is bound by residues 180–183 (RSCD), Asn191, and 221–223 (HIY). Asp183 contributes to the (6R)-5,10-methylene-5,6,7,8-tetrahydrofolate binding site. Ser282 provides a ligand contact to (6R)-5,10-methylene-5,6,7,8-tetrahydrofolate.

This sequence belongs to the thymidylate synthase family. Bacterial-type ThyA subfamily. Homodimer.

It localises to the cytoplasm. It catalyses the reaction dUMP + (6R)-5,10-methylene-5,6,7,8-tetrahydrofolate = 7,8-dihydrofolate + dTMP. The protein operates within pyrimidine metabolism; dTTP biosynthesis. In terms of biological role, catalyzes the reductive methylation of 2'-deoxyuridine-5'-monophosphate (dUMP) to 2'-deoxythymidine-5'-monophosphate (dTMP) while utilizing 5,10-methylenetetrahydrofolate (mTHF) as the methyl donor and reductant in the reaction, yielding dihydrofolate (DHF) as a by-product. This enzymatic reaction provides an intracellular de novo source of dTMP, an essential precursor for DNA biosynthesis. This chain is Thymidylate synthase, found in Vibrio parahaemolyticus serotype O3:K6 (strain RIMD 2210633).